We begin with the raw amino-acid sequence, 202 residues long: D-alanyl-D-alanine dipeptidase (202 aa).

His-116 and Asp-123 together coordinate Zn(2+). The active-site Proton donor/acceptor is Glu-181. Residue His-184 coordinates Zn(2+).

Belongs to the peptidase M15D family. Zn(2+) is required as a cofactor.

The enzyme catalyses D-alanyl-D-alanine + H2O = 2 D-alanine. Its function is as follows. Catalyzes hydrolysis of the D-alanyl-D-alanine dipeptide. The sequence is that of D-alanyl-D-alanine dipeptidase (vanXB) from Enterococcus faecalis (strain ATCC 700802 / V583).